The chain runs to 185 residues: Ribosome-recycling factor (185 aa).

Belongs to the RRF family.

The protein resides in the cytoplasm. Its function is as follows. Responsible for the release of ribosomes from messenger RNA at the termination of protein biosynthesis. May increase the efficiency of translation by recycling ribosomes from one round of translation to another. This Bacillus cereus (strain B4264) protein is Ribosome-recycling factor.